The following is a 274-amino-acid chain: MSQVVHTRRLQAVDLIKRKAEGRKIIALTAYHAHTANIVDSYCDFVLVGDSLGMVMHGMESTLPVTLEMMILQAQAVMRGTARALVVVDMPFGSYEASREQAFLNAARVLKETGAGAVKLEGGARFAETVAFLTERGVPVMGHIGLTPQSVNTMGGFKVQGHGAGDEDRLRADARAISEAGAFAIVMEGIVEPVARAIATDPSIRAATIGIGATAACDGQILVLEDMLGLSDRVPKFVKSYGSLRAHIEEAVRAYADEVQAGRFPADGHTYPPR.

The Mg(2+) site is built by D50 and D89. 3-methyl-2-oxobutanoate contacts are provided by residues 50-51 (DS), D89, and K119. E121 is a Mg(2+) binding site. The Proton acceptor role is filled by E188.

The protein belongs to the PanB family. In terms of assembly, homodecamer; pentamer of dimers. It depends on Mg(2+) as a cofactor.

The protein localises to the cytoplasm. The enzyme catalyses 3-methyl-2-oxobutanoate + (6R)-5,10-methylene-5,6,7,8-tetrahydrofolate + H2O = 2-dehydropantoate + (6S)-5,6,7,8-tetrahydrofolate. It participates in cofactor biosynthesis; (R)-pantothenate biosynthesis; (R)-pantoate from 3-methyl-2-oxobutanoate: step 1/2. Catalyzes the reversible reaction in which hydroxymethyl group from 5,10-methylenetetrahydrofolate is transferred onto alpha-ketoisovalerate to form ketopantoate. The chain is 3-methyl-2-oxobutanoate hydroxymethyltransferase from Methylorubrum populi (strain ATCC BAA-705 / NCIMB 13946 / BJ001) (Methylobacterium populi).